The sequence spans 526 residues: Peptide chain release factor 3 (526 aa).

The tr-type G domain occupies 9–277 (DLRRTFAIIS…GLTKWAPKPL (269 aa)). Residues 18–25 (SHPDAGKT), 86–90 (DTPGH), and 140–143 (NKMD) each bind GTP.

This sequence belongs to the TRAFAC class translation factor GTPase superfamily. Classic translation factor GTPase family. PrfC subfamily.

It is found in the cytoplasm. Its function is as follows. Increases the formation of ribosomal termination complexes and stimulates activities of RF-1 and RF-2. It binds guanine nucleotides and has strong preference for UGA stop codons. It may interact directly with the ribosome. The stimulation of RF-1 and RF-2 is significantly reduced by GTP and GDP, but not by GMP. The sequence is that of Peptide chain release factor 3 from Colwellia psychrerythraea (strain 34H / ATCC BAA-681) (Vibrio psychroerythus).